The following is a 96-amino-acid chain: Co-chaperonin GroES (96 aa).

This sequence belongs to the GroES chaperonin family. Heptamer of 7 subunits arranged in a ring. Interacts with the chaperonin GroEL.

It localises to the cytoplasm. Functionally, together with the chaperonin GroEL, plays an essential role in assisting protein folding. The GroEL-GroES system forms a nano-cage that allows encapsulation of the non-native substrate proteins and provides a physical environment optimized to promote and accelerate protein folding. GroES binds to the apical surface of the GroEL ring, thereby capping the opening of the GroEL channel. In Trichlorobacter lovleyi (strain ATCC BAA-1151 / DSM 17278 / SZ) (Geobacter lovleyi), this protein is Co-chaperonin GroES.